A 490-amino-acid polypeptide reads, in one-letter code: ATP synthase subunit beta, chloroplastic (490 aa).

An ATP-binding site is contributed by 170 to 177 (GGAGVGKT).

The protein belongs to the ATPase alpha/beta chains family. F-type ATPases have 2 components, CF(1) - the catalytic core - and CF(0) - the membrane proton channel. CF(1) has five subunits: alpha(3), beta(3), gamma(1), delta(1), epsilon(1). CF(0) has four main subunits: a(1), b(1), b'(1) and c(9-12).

It localises to the plastid. It is found in the chloroplast thylakoid membrane. It carries out the reaction ATP + H2O + 4 H(+)(in) = ADP + phosphate + 5 H(+)(out). Its function is as follows. Produces ATP from ADP in the presence of a proton gradient across the membrane. The catalytic sites are hosted primarily by the beta subunits. In Ipomoea wrightii (Wright's morning glory), this protein is ATP synthase subunit beta, chloroplastic.